Here is a 273-residue protein sequence, read N- to C-terminus: tRNA pseudouridine synthase B (273 aa).

Aspartate 38 acts as the Nucleophile in catalysis.

Belongs to the pseudouridine synthase TruB family. Type 1 subfamily.

It carries out the reaction uridine(55) in tRNA = pseudouridine(55) in tRNA. In terms of biological role, responsible for synthesis of pseudouridine from uracil-55 in the psi GC loop of transfer RNAs. This Sulfurimonas denitrificans (strain ATCC 33889 / DSM 1251) (Thiomicrospira denitrificans (strain ATCC 33889 / DSM 1251)) protein is tRNA pseudouridine synthase B.